A 360-amino-acid chain; its full sequence is D-alanine--D-alanine ligase (360 aa).

Positions 146–352 constitute an ATP-grasp domain; that stretch reads KLCVADAGIA…YRNLITRLLE (207 aa). 179-234 is an ATP binding site; sequence EAQVSYPLFVKPASLGSSIGISKVHNREELHPALQAACALDWKVVVESTVKGREIE. Positions 305, 319, and 321 each coordinate Mg(2+).

It belongs to the D-alanine--D-alanine ligase family. Mg(2+) serves as cofactor. The cofactor is Mn(2+).

It localises to the cytoplasm. It catalyses the reaction 2 D-alanine + ATP = D-alanyl-D-alanine + ADP + phosphate + H(+). Its pathway is cell wall biogenesis; peptidoglycan biosynthesis. Functionally, cell wall formation. The sequence is that of D-alanine--D-alanine ligase from Chlorobium chlorochromatii (strain CaD3).